Here is a 393-residue protein sequence, read N- to C-terminus: Cytochrome b (393 aa).

4 consecutive transmembrane segments (helical) span residues 32-52, 76-98, 113-133, and 179-199; these read FGSL…FLAM, WLIR…LHIG, LWSI…LGYV, and FFSL…MHLL. Residues His-82 and His-96 each contribute to the heme b site. Heme b-binding residues include His-183 and His-197. His-202 provides a ligand contact to a ubiquinone. 4 helical membrane passes run 225 to 245, 289 to 309, 321 to 341, and 348 to 368; these read FTFK…LFVF, LIGV…PILD, LMRF…FIGS, and YVEI…VVVP.

This sequence belongs to the cytochrome b family. In terms of assembly, fungal cytochrome b-c1 complex contains 10 subunits; 3 respiratory subunits, 2 core proteins and 5 low-molecular weight proteins. Cytochrome b-c1 complex is a homodimer. It depends on heme b as a cofactor.

Its subcellular location is the mitochondrion inner membrane. Component of the ubiquinol-cytochrome c reductase complex (complex III or cytochrome b-c1 complex) that is part of the mitochondrial respiratory chain. The b-c1 complex mediates electron transfer from ubiquinol to cytochrome c. Contributes to the generation of a proton gradient across the mitochondrial membrane that is then used for ATP synthesis. The sequence is that of Cytochrome b (COB) from Mycosarcoma maydis (Corn smut fungus).